Consider the following 328-residue polypeptide: Cytochrome c biogenesis protein CcsA (328 aa).

Helical transmembrane passes span 13–33, 46–66, 73–93, 101–121, 146–166, 234–254, 263–283, and 295–315; these read ISFS…LVNL, GIII…IYSG, LYES…VSYF, LNTI…SGLL, MILG…LLVI, IISL…VWAN, WDPK…YLHI, and AIVA…VNLL.

This sequence belongs to the CcmF/CycK/Ccl1/NrfE/CcsA family. As to quaternary structure, may interact with Ccs1.

The protein resides in the plastid. Its subcellular location is the chloroplast thylakoid membrane. Functionally, required during biogenesis of c-type cytochromes (cytochrome c6 and cytochrome f) at the step of heme attachment. The sequence is that of Cytochrome c biogenesis protein CcsA from Arabidopsis thaliana (Mouse-ear cress).